The primary structure comprises 397 residues: Ribosomal RNA large subunit methyltransferase I (397 aa).

Residues 2 to 80 form the PUA domain; sequence SAAIYLVKGR…QDINRAFFVK (79 aa).

Belongs to the methyltransferase superfamily. RlmI family.

It localises to the cytoplasm. The catalysed reaction is cytidine(1962) in 23S rRNA + S-adenosyl-L-methionine = 5-methylcytidine(1962) in 23S rRNA + S-adenosyl-L-homocysteine + H(+). Its function is as follows. Specifically methylates the cytosine at position 1962 (m5C1962) of 23S rRNA. In Vibrio vulnificus (strain CMCP6), this protein is Ribosomal RNA large subunit methyltransferase I.